We begin with the raw amino-acid sequence, 417 residues long: Riboflavin biosynthesis protein RibBA (417 aa).

Residues 1–204 (MTRFDSIERA…IADLIAWRRK (204 aa)) form a DHBP synthase region. Residues 28–29 (RE), aspartate 33, 141–145 (RPGHT), and glutamate 165 contribute to the D-ribulose 5-phosphate site. Residue glutamate 29 coordinates Mg(2+). Histidine 144 lines the Mg(2+) pocket. Residues 205–417 (HEKHVERVAS…LDDFEAGEML (213 aa)) are GTP cyclohydrolase II. 259 to 263 (RVHSE) is a binding site for GTP. Residues cysteine 264, cysteine 275, and cysteine 277 each contribute to the Zn(2+) site. Residues glutamine 280, 303 to 305 (EGR), and threonine 325 contribute to the GTP site. The active-site Proton acceptor; for GTP cyclohydrolase activity is the aspartate 337. Arginine 339 serves as the catalytic Nucleophile; for GTP cyclohydrolase activity. Positions 360 and 365 each coordinate GTP.

This sequence in the N-terminal section; belongs to the DHBP synthase family. It in the C-terminal section; belongs to the GTP cyclohydrolase II family. Requires Mg(2+) as cofactor. It depends on Mn(2+) as a cofactor. Zn(2+) is required as a cofactor.

The catalysed reaction is D-ribulose 5-phosphate = (2S)-2-hydroxy-3-oxobutyl phosphate + formate + H(+). The enzyme catalyses GTP + 4 H2O = 2,5-diamino-6-hydroxy-4-(5-phosphoribosylamino)-pyrimidine + formate + 2 phosphate + 3 H(+). Its pathway is cofactor biosynthesis; riboflavin biosynthesis; 2-hydroxy-3-oxobutyl phosphate from D-ribulose 5-phosphate: step 1/1. It functions in the pathway cofactor biosynthesis; riboflavin biosynthesis; 5-amino-6-(D-ribitylamino)uracil from GTP: step 1/4. Its function is as follows. Catalyzes the conversion of D-ribulose 5-phosphate to formate and 3,4-dihydroxy-2-butanone 4-phosphate. In terms of biological role, catalyzes the conversion of GTP to 2,5-diamino-6-ribosylamino-4(3H)-pyrimidinone 5'-phosphate (DARP), formate and pyrophosphate. The protein is Riboflavin biosynthesis protein RibBA of Rhodococcus jostii (strain RHA1).